The chain runs to 558 residues: Arginine--tRNA ligase (558 aa).

Residues 119–129 (PNIAKPMSMGH) carry the 'HIGH' region motif.

Belongs to the class-I aminoacyl-tRNA synthetase family. Monomer.

It is found in the cytoplasm. It carries out the reaction tRNA(Arg) + L-arginine + ATP = L-arginyl-tRNA(Arg) + AMP + diphosphate. The sequence is that of Arginine--tRNA ligase from Lactobacillus johnsonii (strain CNCM I-12250 / La1 / NCC 533).